Here is a 455-residue protein sequence, read N- to C-terminus: Chromosomal replication initiator protein DnaA (455 aa).

The tract at residues 1-75 (MDTNNNIEKE…EILSQNKVGM (75 aa)) is domain I, interacts with DnaA modulators. Residues 75–106 (MHLAHSVDVRIEVAPKIQINAQANINYKAIKT) form a domain II region. The interval 107–321 (SVKDSYTFEN…GAIIKISVNA (215 aa)) is domain III, AAA+ region. ATP-binding residues include G151, G153, K154, and T155. The domain IV, binds dsDNA stretch occupies residues 322 to 455 (NLMNAPIDLN…DKKTAFNSSE (134 aa)).

It belongs to the DnaA family. As to quaternary structure, oligomerizes as a right-handed, spiral filament on DNA at oriC.

It localises to the cytoplasm. Plays an essential role in the initiation and regulation of chromosomal replication. ATP-DnaA binds to the origin of replication (oriC) to initiate formation of the DNA replication initiation complex once per cell cycle. Binds the DnaA box (a 9 base pair repeat at the origin) and separates the double-stranded (ds)DNA. Forms a right-handed helical filament on oriC DNA; dsDNA binds to the exterior of the filament while single-stranded (ss)DNA is stabiized in the filament's interior. The ATP-DnaA-oriC complex binds and stabilizes one strand of the AT-rich DNA unwinding element (DUE), permitting loading of DNA polymerase. After initiation quickly degrades to an ADP-DnaA complex that is not apt for DNA replication. Binds acidic phospholipids. The polypeptide is Chromosomal replication initiator protein DnaA (Helicobacter pylori (strain G27)).